Consider the following 276-residue polypeptide: uncharacterized protein (276 aa).

The first 29 residues, 1-29 (MKSHVRSFKTYIRDEIIKKGGWVNAHAHA), serve as a signal peptide directing secretion.

This sequence belongs to the metallo-dependent hydrolases superfamily.

This is an uncharacterized protein from Haemophilus influenzae (strain ATCC 51907 / DSM 11121 / KW20 / Rd).